The chain runs to 380 residues: Cytochrome b (380 aa).

Transmembrane regions (helical) follow at residues 34–54 (FGSLLAVCLMTQILTGLLLAM), 78–99 (WLIRNLHANGASFFFICIFLHI), 114–134 (WNTGVILLLTLMATAFVGYVL), and 179–199 (FFALHFLLPFAIAGITVVHLT). Residues His-84 and His-98 each coordinate heme b. The heme b site is built by His-183 and His-197. His-202 provides a ligand contact to a ubiquinone. The next 4 helical transmembrane spans lie at 227 to 247 (LKDILGLTLMLTPFLTLALFS), 289 to 309 (LGGVLALAASVLILFLIPFLH), 321 to 341 (LSQTLFWLLVANLLILTWIGS), and 348 to 368 (FMIIGQMASLSYFTILLILFP).

It belongs to the cytochrome b family. In terms of assembly, the cytochrome bc1 complex contains 11 subunits: 3 respiratory subunits (MT-CYB, CYC1 and UQCRFS1), 2 core proteins (UQCRC1 and UQCRC2) and 6 low-molecular weight proteins (UQCRH/QCR6, UQCRB/QCR7, UQCRQ/QCR8, UQCR10/QCR9, UQCR11/QCR10 and a cleavage product of UQCRFS1). This cytochrome bc1 complex then forms a dimer. Heme b serves as cofactor.

The protein resides in the mitochondrion inner membrane. Functionally, component of the ubiquinol-cytochrome c reductase complex (complex III or cytochrome b-c1 complex) that is part of the mitochondrial respiratory chain. The b-c1 complex mediates electron transfer from ubiquinol to cytochrome c. Contributes to the generation of a proton gradient across the mitochondrial membrane that is then used for ATP synthesis. This chain is Cytochrome b (MT-CYB), found in Gallus lafayettii (Sri Lanka junglefowl).